The following is a 336-amino-acid chain: DNA-directed RNA polymerase subunit alpha (336 aa).

Residues 1–232 (MIQKNWQELI…DQLSVFVNFD (232 aa)) form an alpha N-terminal domain (alpha-NTD) region. The tract at residues 248–336 (FNPALLKKVD…DLAKRYEDQY (89 aa)) is alpha C-terminal domain (alpha-CTD).

The protein belongs to the RNA polymerase alpha chain family. Homodimer. The RNAP catalytic core consists of 2 alpha, 1 beta, 1 beta' and 1 omega subunit. When a sigma factor is associated with the core the holoenzyme is formed, which can initiate transcription.

It catalyses the reaction RNA(n) + a ribonucleoside 5'-triphosphate = RNA(n+1) + diphosphate. Functionally, DNA-dependent RNA polymerase catalyzes the transcription of DNA into RNA using the four ribonucleoside triphosphates as substrates. This Sinorhizobium medicae (strain WSM419) (Ensifer medicae) protein is DNA-directed RNA polymerase subunit alpha.